Consider the following 98-residue polypeptide: Serine protease inhibitor Kazal-type 14 (98 aa).

The first 23 residues, 1–23 (MVKYFQVLWSLLFSIMLHSMLLA), serve as a signal peptide directing secretion. The Kazal-like domain occupies 35–98 (GLIKIKCPYK…QIRYYHTGRC (64 aa)). 3 disulfide bridges follow: Cys41–Cys80, Cys58–Cys77, and Cys66–Cys98. Asn52 is a glycosylation site (N-linked (GlcNAc...) asparagine).

It localises to the secreted. May be a serine protease inhibitor. This Rattus norvegicus (Rat) protein is Serine protease inhibitor Kazal-type 14 (Spink14).